Reading from the N-terminus, the 245-residue chain is Probable septum site-determining protein MinC (245 aa).

Residues 112–132 (ARERPLESAEPVAPKKPEKPP) are compositionally biased toward basic and acidic residues. The tract at residues 112 to 140 (ARERPLESAEPVAPKKPEKPPEPTVKPTR) is disordered.

It belongs to the MinC family. In terms of assembly, interacts with MinD and FtsZ.

Functionally, cell division inhibitor that blocks the formation of polar Z ring septums. Rapidly oscillates between the poles of the cell to destabilize FtsZ filaments that have formed before they mature into polar Z rings. Prevents FtsZ polymerization. In Pseudomonas fluorescens (strain Pf0-1), this protein is Probable septum site-determining protein MinC.